Reading from the N-terminus, the 71-residue chain is General transcription and DNA repair factor IIH subunit TFB5 (71 aa).

It belongs to the TFB5 family. Component of the 7-subunit TFIIH core complex composed of XPB, XPD, TFB1/GTF2H1, GTF2H2/P44, TFB4/GTF2H3, TFB2/GTF2H4 and TFB5/GTF2H5, which is active in NER. The core complex associates with the 3-subunit CDK-activating kinase (CAK) module composed of CYCH1/cyclin H1, CDKD and MAT1/At4g30820 to form the 10-subunit holoenzyme (holo-TFIIH) active in transcription.

The protein localises to the nucleus. In terms of biological role, component of the general transcription and DNA repair factor IIH (TFIIH) core complex, which is involved in general and transcription-coupled nucleotide excision repair (NER) of damaged DNA and, when complexed to CAK, in RNA transcription by RNA polymerase II. In NER, TFIIH acts by opening DNA around the lesion to allow the excision of the damaged oligonucleotide and its replacement by a new DNA fragment. In transcription, TFIIH has an essential role in transcription initiation. When the pre-initiation complex (PIC) has been established, TFIIH is required for promoter opening and promoter escape. Phosphorylation of the C-terminal tail (CTD) of the largest subunit of RNA polymerase II by the kinase module CAK controls the initiation of transcription. This chain is General transcription and DNA repair factor IIH subunit TFB5, found in Arabidopsis thaliana (Mouse-ear cress).